Reading from the N-terminus, the 27-residue chain is Caerulein precursor fragment R7 (27 aa).

In terms of tissue distribution, expressed by the skin glands.

Its subcellular location is the secreted. Antimicrobial peptide. The chain is Caerulein precursor fragment R7 from Xenopus ruwenzoriensis (Uganda clawed frog).